The sequence spans 66 residues: Large ribosomal subunit protein bL35 (66 aa).

Positions 1–26 are enriched in basic residues; the sequence is MPKMKTHRGSAKRFKKTGSGKLKRSH. The tract at residues 1–48 is disordered; sequence MPKMKTHRGSAKRFKKTGSGKLKRSHAYTSHLFANKSQKQKRKLRKSA.

The protein belongs to the bacterial ribosomal protein bL35 family.

In Bacillus licheniformis (strain ATCC 14580 / DSM 13 / JCM 2505 / CCUG 7422 / NBRC 12200 / NCIMB 9375 / NCTC 10341 / NRRL NRS-1264 / Gibson 46), this protein is Large ribosomal subunit protein bL35.